A 364-amino-acid chain; its full sequence is Capsular polysaccharide phosphotransferase fcs1 (364 aa).

It belongs to the stealth family.

Its function is as follows. Part of a group II capsule biosynthesis locus. The polypeptide is Capsular polysaccharide phosphotransferase fcs1 (fcs1) (Haemophilus influenzae).